The chain runs to 147 residues: Deoxyuridine 5'-triphosphate nucleotidohydrolase (147 aa).

Arg-24 lines the Mg(2+) pocket. Residues 68 to 70, 82 to 85, Tyr-88, Gly-93, Ile-95, and Arg-111 contribute to the dUTP site; these read PRS and GVID.

This sequence belongs to the dUTPase family. Mg(2+) serves as cofactor.

The catalysed reaction is dUTP + H2O = dUMP + diphosphate + H(+). Its function is as follows. This enzyme is involved in nucleotide metabolism: it produces dUMP, the immediate precursor of thymidine nucleotides and it decreases the intracellular concentration of dUTP so that uracil cannot be incorporated into DNA. In Oryctolagus cuniculus (Rabbit), this protein is Deoxyuridine 5'-triphosphate nucleotidohydrolase (OPG046).